The following is a 220-amino-acid chain: Deoxyribose-phosphate aldolase (220 aa).

The Proton donor/acceptor role is filled by Asp92. The Schiff-base intermediate with acetaldehyde role is filled by Lys157. The active-site Proton donor/acceptor is Lys186.

It belongs to the DeoC/FbaB aldolase family. DeoC type 1 subfamily.

Its subcellular location is the cytoplasm. The enzyme catalyses 2-deoxy-D-ribose 5-phosphate = D-glyceraldehyde 3-phosphate + acetaldehyde. Its pathway is carbohydrate degradation; 2-deoxy-D-ribose 1-phosphate degradation; D-glyceraldehyde 3-phosphate and acetaldehyde from 2-deoxy-alpha-D-ribose 1-phosphate: step 2/2. Catalyzes a reversible aldol reaction between acetaldehyde and D-glyceraldehyde 3-phosphate to generate 2-deoxy-D-ribose 5-phosphate. This is Deoxyribose-phosphate aldolase from Caldicellulosiruptor saccharolyticus (strain ATCC 43494 / DSM 8903 / Tp8T 6331).